Consider the following 165-residue polypeptide: Ribonuclease H2 subunit C (165 aa).

An N-acetylmethionine modification is found at M1.

This sequence belongs to the RNase H2 subunit C family. As to quaternary structure, the RNase H2 complex is a heterotrimer composed of the catalytic subunit RNASEH2A and the non-catalytic subunits RNASEH2B and RNASEH2C.

Its subcellular location is the nucleus. Its function is as follows. Non catalytic subunit of RNase H2, an endonuclease that specifically degrades the RNA of RNA:DNA hybrids. Participates in DNA replication, possibly by mediating the removal of lagging-strand Okazaki fragment RNA primers during DNA replication. Mediates the excision of single ribonucleotides from DNA:RNA duplexes. The chain is Ribonuclease H2 subunit C (RNASEH2C) from Bos taurus (Bovine).